The chain runs to 121 residues: Small ribosomal subunit protein bS16 (121 aa).

The segment covering 85–110 has biased composition (basic and acidic residues); the sequence is REARNNPKKAEPGKKAQERAAERAAK. The segment at 85–121 is disordered; the sequence is REARNNPKKAEPGKKAQERAAERAAKAAEASEAASAE. The span at 111 to 121 shows a compositional bias: low complexity; the sequence is AAEASEAASAE.

The protein belongs to the bacterial ribosomal protein bS16 family.

This chain is Small ribosomal subunit protein bS16, found in Azorhizobium caulinodans (strain ATCC 43989 / DSM 5975 / JCM 20966 / LMG 6465 / NBRC 14845 / NCIMB 13405 / ORS 571).